We begin with the raw amino-acid sequence, 243 residues long: Pyridoxine 5'-phosphate synthase (243 aa).

Asparagine 9 contributes to the 3-amino-2-oxopropyl phosphate binding site. 1-deoxy-D-xylulose 5-phosphate is bound at residue 11 to 12 (DH). Arginine 20 is a binding site for 3-amino-2-oxopropyl phosphate. Residue histidine 45 is the Proton acceptor of the active site. 1-deoxy-D-xylulose 5-phosphate contacts are provided by arginine 47 and histidine 52. Catalysis depends on glutamate 72, which acts as the Proton acceptor. Threonine 102 provides a ligand contact to 1-deoxy-D-xylulose 5-phosphate. The active-site Proton donor is histidine 193. 3-amino-2-oxopropyl phosphate is bound by residues glycine 194 and 215-216 (GH).

It belongs to the PNP synthase family. As to quaternary structure, homooctamer; tetramer of dimers.

It localises to the cytoplasm. The enzyme catalyses 3-amino-2-oxopropyl phosphate + 1-deoxy-D-xylulose 5-phosphate = pyridoxine 5'-phosphate + phosphate + 2 H2O + H(+). It participates in cofactor biosynthesis; pyridoxine 5'-phosphate biosynthesis; pyridoxine 5'-phosphate from D-erythrose 4-phosphate: step 5/5. Catalyzes the complicated ring closure reaction between the two acyclic compounds 1-deoxy-D-xylulose-5-phosphate (DXP) and 3-amino-2-oxopropyl phosphate (1-amino-acetone-3-phosphate or AAP) to form pyridoxine 5'-phosphate (PNP) and inorganic phosphate. The chain is Pyridoxine 5'-phosphate synthase from Yersinia pestis.